Consider the following 878-residue polypeptide: F-box DNA helicase protein 1 (878 aa).

Residues 8–56 (SCKFYRLPLEIIPLICRFLSVQDIQSFIRVFPSFQTILDSSNDLFWKKK) form the F-box domain.

This sequence belongs to the helicase family. UvrD subfamily. As to quaternary structure, part of the E3 ubiquitin ligase Skp1-Cullin-1-F-box (SCF) complex. Interacts with skp1 and ssb1. Mg(2+) is required as a cofactor. Mn(2+) serves as cofactor.

It localises to the cytoplasm. It is found in the nucleus. It catalyses the reaction Couples ATP hydrolysis with the unwinding of duplex DNA by translocating in the 3'-5' direction.. The catalysed reaction is ATP + H2O = ADP + phosphate + H(+). It participates in protein modification; protein ubiquitination. Involved in ATP-dependent DNA-unwinding in a 3' to 5' direction, and ATP-ase activities stimulated by the single-stranded DNA-binding protein ssb1. Essential for viability and normal growth of stationary phase cells and in the absence of either srs2 or rqh1 DNA helicase. Involved in DNA recombination repair of strand breaks and stalled or collapsed replication forks, on the rhp51-dependent pathway: promotes rhp51 filament dissolution from stalled forks, thereby inhibiting homologous recombination and preventing excessive recombination. Ubiquitination and DNA helicase activities are essential for controlling rhp51-dependent recombination in the absence of rad22. Plays a role in the processing of toxic recombination intermediates. Promotes proper chromosome segregation. This chain is F-box DNA helicase protein 1 (fbh1), found in Schizosaccharomyces pombe (strain 972 / ATCC 24843) (Fission yeast).